Consider the following 427-residue polypeptide: Indole diterpene prenyltransferase idtF (427 aa).

Substrate contacts are provided by arginine 97, lysine 195, arginine 264, lysine 266, tyrosine 268, and tyrosine 352.

This sequence belongs to the tryptophan dimethylallyltransferase family.

It functions in the pathway secondary metabolite biosynthesis. Functionally, indole diterpene prenyltransferase; part of the gene cluster that mediates the biosynthesis of paspalitrems, indole-diterpene (IDT) mycotoxins that are potent tremorgens in mammals. The geranylgeranyl diphosphate (GGPP) synthase idtG is proposed to catalyze the first step in IDT biosynthesis via catalysis of a series of iterative condensations of isopentenyl diphosphate (IPP) with dimethylallyl diphosphate (DMAPP), geranyl diphosphate (GPP), and farnesyl diphosphate (FPP), to form GGPP. Condensation of indole-3-glycerol phosphate with GGPP by the prenyltransferase idtC then forms 3-geranylgeranylindole (3-GGI). Epoxidation of the two terminal alkenes of the geranylgeranyl moiety by the FAD-dependent monooxygenase idtM, and cyclization by the terpene cyclase idtB then leads to the production of paspaline. The cytochrome P450 monooxygenase idtP then catalyzes oxidative elimination of the pendant methyl group at C-12 of paspaline and generates the C-10 ketone to yield 13-desoxypaxilline. The cytochrome P450 monooxygenase idtQ may catalyze the C-13 oxidation of 13-desoxypaxilline to afford paxilline. Considering that both paspalicine and paxilline were detected in C.paspali, idtQ also catalyzes the formation of paspalinine from 13-desoxypaxilline via paspalicine as an intermediate. Finally, the alpha-prenyltransferase idtF prenylates paspalinine at the C-20 or the C-21 positions to yield paspalitrems A and C, respectively. The hydroxylation of paspalitrem A at C-32 by a still unknown oxidase affords paspalitrem B. This Claviceps paspali (Rye ergot fungus) protein is Indole diterpene prenyltransferase idtF.